The sequence spans 542 residues: Chaperonin GroEL 2 (542 aa).

ATP contacts are provided by residues 29–32, 86–90, Gly413, 477–479, and Asp493; these read TLGP, DGTTT, and NAA.

Belongs to the chaperonin (HSP60) family. Forms a cylinder of 14 subunits composed of two heptameric rings stacked back-to-back. Interacts with the co-chaperonin GroES.

The protein localises to the cytoplasm. The enzyme catalyses ATP + H2O + a folded polypeptide = ADP + phosphate + an unfolded polypeptide.. Functionally, together with its co-chaperonin GroES, plays an essential role in assisting protein folding. The GroEL-GroES system forms a nano-cage that allows encapsulation of the non-native substrate proteins and provides a physical environment optimized to promote and accelerate protein folding. The polypeptide is Chaperonin GroEL 2 (Frankia alni (strain DSM 45986 / CECT 9034 / ACN14a)).